A 276-amino-acid chain; its full sequence is uncharacterized protein (276 aa).

Residues 20–137 enclose the AB hydrolase-1 domain; that stretch reads PVLIFIPGAN…PPINTFLPDS (118 aa). Residues 57–76 are disordered; sequence GESELTEPLPDSASNPDSDY.

It belongs to the AB hydrolase superfamily.

This is an uncharacterized protein from Staphylococcus aureus (strain bovine RF122 / ET3-1).